The chain runs to 30 residues: Varv peptide B (30 aa).

Residues 1 to 30 (GLPVCGETCFGGTCNTPGCSCDPWPMCSRN) constitute a cross-link (cyclopeptide (Gly-Asn)). Intrachain disulfides connect C5–C19, C9–C21, and C14–C27.

Post-translationally, this is a cyclic peptide.

Functionally, probably participates in a plant defense mechanism. This is Varv peptide B from Viola arvensis (European field pansy).